Here is a 568-residue protein sequence, read N- to C-terminus: Oxygen-dependent choline dehydrogenase (568 aa).

Residue 8-37 (DYIIIGAGSAGNTLAARLTEDAGVTVLLLE) participates in FAD binding. The Proton acceptor role is filled by His-477.

This sequence belongs to the GMC oxidoreductase family. It depends on FAD as a cofactor.

It catalyses the reaction choline + A = betaine aldehyde + AH2. It carries out the reaction betaine aldehyde + NAD(+) + H2O = glycine betaine + NADH + 2 H(+). The protein operates within amine and polyamine biosynthesis; betaine biosynthesis via choline pathway; betaine aldehyde from choline (cytochrome c reductase route): step 1/1. Its function is as follows. Involved in the biosynthesis of the osmoprotectant glycine betaine. Catalyzes the oxidation of choline to betaine aldehyde and betaine aldehyde to glycine betaine at the same rate. In Pseudomonas syringae pv. tomato (strain ATCC BAA-871 / DC3000), this protein is Oxygen-dependent choline dehydrogenase.